The chain runs to 727 residues: Iron-sulfur clusters transporter ATM1, mitochondrial (727 aa).

The N-terminal 25 residues, 1–25 (MLIGGAQNRLYQLRTSNILGLLRTR), are a transit peptide targeting the mitochondrion. The Mitochondrial matrix portion of the chain corresponds to 26-138 (SALRVGSKVE…PRGNTKVKVR (113 aa)). Residues 87–107 (KSKLPNEDTAHNASEKNSKKT) form a disordered region. Over residues 90 to 107 (LPNEDTAHNASEKNSKKT) the composition is skewed to basic and acidic residues. Residues 139 to 160 (VLLALALLIGAKVLNVQVPFFF) traverse the membrane as a helical segment. The ABC transmembrane type-1 domain occupies 139 to 429 (VLLALALLIG…LGSVYRELKQ (291 aa)). The Mitochondrial intermembrane segment spans residues 161-183 (KQIIDGMNVDWSDATVALPAALG). The helical transmembrane segment at 184-207 (LTIMCYGLARFGAVLFGELRNAIF) threads the bilayer. At 208–256 (ARVAQNAIRNVSLQTFEHLMKLDLGWHLSRQTGGLTRAMDRGTKGISYV) the chain is on the mitochondrial matrix side. The chain crosses the membrane as a helical span at residues 257–280 (LSAMVFHIIPITFEISVVCGILTY). Position 281 (Gln281) is a topological domain, mitochondrial intermembrane. A helical transmembrane segment spans residues 282 to 302 (FGASFAGITFTTMLLYSIFTI). Topologically, residues 303–368 (RTTAWRTRFR…SQVKVAQSLA (66 aa)) are mitochondrial matrix. Glutathione-binding positions include 308–312 (RTRFR) and 371–374 (NSGQ). Residues 369–387 (FLNSGQSLIFTTALTGMMY) form a helical membrane-spanning segment. The Mitochondrial intermembrane segment spans residues 388 to 402 (MGCTGVIGGDLTVGD). Residues 403 to 424 (LVLINQLVFQLSVPLNFLGSVY) traverse the membrane as a helical segment. Gly421 serves as a coordination point for glutathione. Topologically, residues 425–727 (RELKQSLIDM…ETLEKLNKSI (303 aa)) are mitochondrial matrix. The ABC transporter domain maps to 465–701 (IKFENVTFGY…ENSLYKELWR (237 aa)). ATP-binding positions include Tyr474 and 498-509 (GPSGSGKSTVLK).

It belongs to the ABC transporter superfamily. ABCB family. Heavy Metal importer (TC 3.A.1.210) subfamily. In terms of assembly, homodimer.

Its subcellular location is the mitochondrion inner membrane. Its function is as follows. Performs an essential function in the generation of cytoplasmic iron-sulfur proteins by mediating the ATP-dependent export of Fe/S cluster precursors synthesized by NFS1 and other mitochondrial proteins. Hydrolyzes ATP. Binds glutathione and may function by transporting a glutathione-conjugated iron-sulfur compound. This is Iron-sulfur clusters transporter ATM1, mitochondrial from Candida glabrata (strain ATCC 2001 / BCRC 20586 / JCM 3761 / NBRC 0622 / NRRL Y-65 / CBS 138) (Yeast).